Consider the following 481-residue polypeptide: MKGRAHIWVALLLACLPPRFRNLDKDVSSPVCRTDDVYTGDAFYPFKKKKYVLYDVHIGEGFNLQKEVLYRVALAVYYLNQEERTHVHYLVLPPWCYVTHWGRERTNARIKWSIFFNLKALQNVIPVMEYAEYEGQFGPHTDYILSYRHIIGEWPKRGDKKSFQVLKLDKCQVKGYKLKKNLRKNCDHKYSVEYSGKCTNVKGKKMECLEFFFITSHFVSSTLLDIFQYDADSVLIKHGSNILVAFMNELVDANLEDVLPYSEDLINEGDQFVEKNFKSSKNYISCHLRYTDFRKISTYDVSPVGISLLKLLYIMFLRKSTLIFVSTDEKKEVKKVIDSQFPQFKHFFFFYENEKLHTGQVAIVDQWICARSGTFVGNIFSRFSMHIKWERSLIGKGGPDHNLDLCGYSISTNHELRKKYSDVQDAHLDEEALQKLRPLYMRLSQKDRDFLRTICYDFAHYYPQNVSIYRRGERREEGRLM.

The signal sequence occupies residues methionine 1 to asparagine 22. Residues glycine 59–asparagine 63, histidine 287–arginine 289, aspartate 365, and arginine 382–phenylalanine 383 contribute to the GDP-beta-L-fucose site. The Proton acceptor role is filled by glutamate 60.

Belongs to the glycosyltransferase 68 family.

The protein resides in the endoplasmic reticulum. The enzyme catalyses L-seryl-[protein] + GDP-beta-L-fucose = 3-O-(alpha-L-fucosyl)-L-seryl-[protein] + GDP + H(+). It catalyses the reaction L-threonyl-[protein] + GDP-beta-L-fucose = 3-O-(alpha-L-fucosyl)-L-threonyl-[protein] + GDP + H(+). The protein operates within protein modification; protein glycosylation. Catalyzes the reaction that attaches fucose through an O-glycosidic linkage to a conserved serine or threonine residue in the consensus sequence C1-X-X-S/T-C2 of thrombospondin type I repeats (TSRs) where C1 and C2 are the first and second cysteines of the repeat, respectively. O-fucosylates sporozoite proteins CSP and TRAP. O-fucosylation regulates stability and intracellular trafficking of TRAP but not of CSP. Probably by regulating protein O-fucosylation, may play a role in parasite transmission to the mosquito vector and/or infection of the vertebrate host hepatocytes; however, POFUT2 involvement in transmission/infection is controversial. The sequence is that of GDP-fucose protein O-fucosyltransferase 2 from Plasmodium vivax (strain Salvador I).